A 99-amino-acid polypeptide reads, in one-letter code: MKVSAGILCLLLVAATFGTQVLAQPDSVSTPITCCFSVINGKIPFKKLDSYTRITNSQCPQEAVIFKTKADRDVCADPKQKWVQTSIRLLDQKSRTPKP.

The N-terminal stretch at 1 to 23 (MKVSAGILCLLLVAATFGTQVLA) is a signal peptide. Glutamine 24 bears the Pyrrolidone carboxylic acid mark. Intrachain disulfides connect cysteine 34-cysteine 59 and cysteine 35-cysteine 75.

This sequence belongs to the intercrine beta (chemokine CC) family. In terms of assembly, monomer or homodimer; in equilibrium.

Its subcellular location is the secreted. In terms of biological role, chemotactic factor that attracts monocytes. This protein can bind heparin. The protein is C-C motif chemokine 8 (CCL8) of Bos taurus (Bovine).